The sequence spans 340 residues: Dihydroorotate dehydrogenase (quinone) (340 aa).

Residues 61–65 (AGLDK) and Thr85 each bind FMN. Position 65 (Lys65) interacts with substrate. 110–114 (NRMGF) lines the substrate pocket. Positions 138 and 171 each coordinate FMN. A substrate-binding site is contributed by Asn171. Ser174 functions as the Nucleophile in the catalytic mechanism. Substrate is bound at residue Asn176. FMN-binding residues include Lys216 and Thr244. Residue 245–246 (NT) coordinates substrate. FMN contacts are provided by residues Gly267, Gly296, and 317–318 (YS).

It belongs to the dihydroorotate dehydrogenase family. Type 2 subfamily. Monomer. FMN serves as cofactor.

Its subcellular location is the cell membrane. It carries out the reaction (S)-dihydroorotate + a quinone = orotate + a quinol. It functions in the pathway pyrimidine metabolism; UMP biosynthesis via de novo pathway; orotate from (S)-dihydroorotate (quinone route): step 1/1. Catalyzes the conversion of dihydroorotate to orotate with quinone as electron acceptor. This chain is Dihydroorotate dehydrogenase (quinone), found in Pseudomonas putida (strain ATCC 47054 / DSM 6125 / CFBP 8728 / NCIMB 11950 / KT2440).